The chain runs to 412 residues: Major facilitator superfamily domain-containing protein 3 (412 aa).

The next 12 membrane-spanning stretches (helical) occupy residues 10–30 (GLYLVQGLPYGLQSGLLPVLL), 40–60 (VGLAKVLYAPWLLKLAWAPLV), 73–93 (STAGLGLVCGLLAGLPPPGAG), 94–114 (QAGLPAAVAGLLLLLNLGAAM), 138–158 (VQVVAYKLGAALAGGALLALL), 166–186 (LFLLLAATYWLAAALAWAAPA), 209–229 (VLAVPGTVWTAGFVLTYKLGE), 250–270 (LGLWNGVGAVVCSIAGSSLGG), 291–311 (LGGLACQTALVFHLDTLGASM), 321–341 (ALLSLCLQHFLGGLVTTVTFT), 361–381 (LLATLELLGKLLLGTLAGGLA), and 384–404 (LGPHPCFLLLLILSAFPVLYL).

This sequence belongs to the major facilitator superfamily.

It localises to the membrane. The sequence is that of Major facilitator superfamily domain-containing protein 3 (MFSD3) from Homo sapiens (Human).